We begin with the raw amino-acid sequence, 431 residues long: DNA polymerase delta subunit 3 (431 aa).

Residues 64–80 (QGSDSGEDLYSVVLESR) are necessary for function, possibly resulting from its inability to interact with PolD2. The interval 128–431 (PGAGKIVPSA…AGIMNFFSKK (304 aa)) is disordered. Residues 156–171 (SKSAVKLEPSKSSLKS) are compositionally biased toward low complexity. 2 stretches are compositionally biased toward basic and acidic residues: residues 172–200 (EPAK…EQAS) and 252–271 (SPPE…NKKE). Residues 278 to 290 (PSPTKKPTTANTS) show a composition bias toward low complexity. Positions 294 to 307 (FDEESAESSDEEEK) are enriched in acidic residues. Composition is skewed to basic and acidic residues over residues 308 to 328 (LDML…EKAS) and 343 to 362 (QPPK…KMDT). The segment covering 387 to 411 (PANKKVSPKAAAPVNKKKSPPSAAK) has biased composition (low complexity).

Component of both the DNA polymerase delta and DNA polymerase zeta complexes. The DNA polymerase delta complex consists of three subunits: the catalytic subunit PolD1 and two accessory subunits PolD2/Pol31 and PolD3/Pol32. Within the delta complex, interacts with both PolD1 and PolD2. Component of the DNA polymerase zeta complex consisting of four subunits: the catalytic subunit PolZ1 and three accessory subunits PolZ2/Rev7, PolD2/Pol31 and PolD3/Pol32. As to expression, expressed in ovaries (at the protein level). Expressed in ovaries.

It is found in the nucleus. The protein resides in the nucleoplasm. In terms of biological role, accessory component of the DNA polymerase delta complex and possibly the DNA polymerase zeta complex. As a component of the delta complex, participates in high fidelity genome replication, including lagging strand synthesis, DNA recombination and repair. Required to recruit the DNA polymerase delta complex to the nucleus of rapidly dividing embryonic cells, and as a consequence is essential for genome replication during the earliest cell cycles. Increases the efficiency and processivity of DNA synthesis of the DNA polymerases during mitotic DNA replication and repair. During development this function is essential for preventing replication stress that results in the formation of chromosomal fragile sites (CFS) such as chromosomal breaks. Ensures genomic stability by promoting several types of DNA repair mechanisms including repairing broken dicentric chromosomes through homolog-dependent break-induced replication (BIR). During homologous recombination (HR) repair, required for maintaining the processivity of the delta complex during break-induced replication; a form of HR that requires extensive DNA synthesis such as the repair of large gaps. Able to suppress position effect variegation and may therefore have a role in the induction of chromatin state changes that likely include its activities in DNA replication and repair. The protein is DNA polymerase delta subunit 3 of Drosophila melanogaster (Fruit fly).